Here is a 239-residue protein sequence, read N- to C-terminus: Putative HTH-type transcriptional regulator YkgA (239 aa).

The HTH araC/xylS-type domain occupies 19–117 (QQLLEWIECN…GCSPREYRHR (99 aa)). 2 DNA-binding regions (H-T-H motif) span residues 36–57 (EDIA…RNFM) and 84–107 (MLDI…KKLF).

In Escherichia coli (strain K12), this protein is Putative HTH-type transcriptional regulator YkgA (ykgA).